Consider the following 430-residue polypeptide: Acetyl-CoA acetyltransferase FG05087, mitochondrial (430 aa).

Residues 1–32 constitute a mitochondrion transit peptide; it reads MTVTQLRSAGRLAQLAGHVNGARQFSTRPALR. The active-site Acyl-thioester intermediate is the C122. Y217 is a binding site for K(+). K260 serves as a coordination point for CoA. Residue A278 participates in K(+) binding. S282 contributes to the CoA binding site. Active-site proton acceptor residues include H385 and C413. Position 414 (N414) interacts with chloride.

The protein belongs to the thiolase-like superfamily. Thiolase family. As to quaternary structure, homotetramer. K(+) is required as a cofactor.

It is found in the mitochondrion. The enzyme catalyses 2 acetyl-CoA = acetoacetyl-CoA + CoA. In terms of biological role, mitochondrial acetyl-CoA acetyltransferase that catalyzes both the formation and degradation of acetoacetyl-CoA. Seems not to be involved in ergosterol biosynthesis. Plays an important role in growth, morphogenesis and maintaining mitochondrial function including the response to oxidative stresses. The polypeptide is Acetyl-CoA acetyltransferase FG05087, mitochondrial (Gibberella zeae (strain ATCC MYA-4620 / CBS 123657 / FGSC 9075 / NRRL 31084 / PH-1) (Wheat head blight fungus)).